Here is a 251-residue protein sequence, read N- to C-terminus: MKLIEAANYEEMSQKAADIIIAQVKEKPDSVLGLATGSTMLGTYKQLVEDHRQNGTSYRNVRTVNLDEYIGLSPDHPNSYRYYMNQHLFSHIDIPLSQTYIPNGASDDVEAECRRYEQLIESLGGIDLQLLGIGRNGHIGFNEPGTSFSAPTHVVELAPSTRQANARFFPSFNDVPRQAITMGIATIMKSRHILLLASGTAKAPIMAKLFEETVTTDVPASVLHTHPNVTVIADQDALSLVPDEKRKVYAK.

D67 functions as the Proton acceptor; for enolization step in the catalytic mechanism. The active-site For ring-opening step is N136. The active-site Proton acceptor; for ring-opening step is H138. The For ring-opening step role is filled by E143.

This sequence belongs to the glucosamine/galactosamine-6-phosphate isomerase family. NagB subfamily.

It carries out the reaction alpha-D-glucosamine 6-phosphate + H2O = beta-D-fructose 6-phosphate + NH4(+). It participates in amino-sugar metabolism; N-acetylneuraminate degradation; D-fructose 6-phosphate from N-acetylneuraminate: step 5/5. In terms of biological role, catalyzes the reversible isomerization-deamination of glucosamine 6-phosphate (GlcN6P) to form fructose 6-phosphate (Fru6P) and ammonium ion. The polypeptide is Glucosamine-6-phosphate deaminase (Geobacillus sp. (strain WCH70)).